We begin with the raw amino-acid sequence, 290 residues long: Porphobilinogen deaminase (290 aa).

At Cys-238 the chain carries S-(dipyrrolylmethanemethyl)cysteine.

The protein belongs to the HMBS family. As to quaternary structure, monomer. It depends on dipyrromethane as a cofactor.

It catalyses the reaction 4 porphobilinogen + H2O = hydroxymethylbilane + 4 NH4(+). The protein operates within porphyrin-containing compound metabolism; protoporphyrin-IX biosynthesis; coproporphyrinogen-III from 5-aminolevulinate: step 2/4. Its function is as follows. Tetrapolymerization of the monopyrrole PBG into the hydroxymethylbilane pre-uroporphyrinogen in several discrete steps. The sequence is that of Porphobilinogen deaminase from Clostridium botulinum (strain Eklund 17B / Type B).